Here is a 441-residue protein sequence, read N- to C-terminus: tRNA-2-methylthio-N(6)-dimethylallyladenosine synthase (441 aa).

The 117-residue stretch at 5–121 (KKLFIKTYGC…LPQMEARLRE (117 aa)) folds into the MTTase N-terminal domain. C14, C50, C84, C159, C163, and C166 together coordinate [4Fe-4S] cluster. One can recognise a Radical SAM core domain in the interval 145-380 (ARRAPSAFLT…TRQQQDIQQS (236 aa)). The 63-residue stretch at 379-441 (QSMVGRDVSV…RNSLAAVTLA (63 aa)) folds into the TRAM domain.

The protein belongs to the methylthiotransferase family. MiaB subfamily. In terms of assembly, monomer. It depends on [4Fe-4S] cluster as a cofactor.

It is found in the cytoplasm. It carries out the reaction N(6)-dimethylallyladenosine(37) in tRNA + (sulfur carrier)-SH + AH2 + 2 S-adenosyl-L-methionine = 2-methylsulfanyl-N(6)-dimethylallyladenosine(37) in tRNA + (sulfur carrier)-H + 5'-deoxyadenosine + L-methionine + A + S-adenosyl-L-homocysteine + 2 H(+). Catalyzes the methylthiolation of N6-(dimethylallyl)adenosine (i(6)A), leading to the formation of 2-methylthio-N6-(dimethylallyl)adenosine (ms(2)i(6)A) at position 37 in tRNAs that read codons beginning with uridine. The polypeptide is tRNA-2-methylthio-N(6)-dimethylallyladenosine synthase (Roseobacter denitrificans (strain ATCC 33942 / OCh 114) (Erythrobacter sp. (strain OCh 114))).